The primary structure comprises 2610 residues: E3 ubiquitin-protein ligase HECTD1 (2610 aa).

The interval 246–269 is disordered; that stretch reads TVSGPSSACKPGRSTTGAPSTTAD. The segment covering 258-269 has biased composition (polar residues); that stretch reads RSTTGAPSTTAD. ANK repeat units lie at residues 395-424, 426-455, 459-491, and 579-612; these read VGQTLLNWASAFGTQEMVEFLCERGADVNR, QRSSSLHYAACFGRPQVAKTLLRHGANPDL, DGKTPLDKARERGHSEVVAILQSPGDWMCPVNK, and ITATVLDQEDDDDGHLLALQIIRDLVDKGGDIFL. The tract at residues 489–513 is disordered; it reads VNKGDDKKKKDTNKDEEECNEPKGD. A compositionally biased stretch (basic and acidic residues) spans 491–501; that stretch reads KGDDKKKKDTN. Disordered regions lie at residues 627–657 and 707–748; these read LAGPSSDDENEEESKPEKEDEPQEDAKELQQ and SSGS…LSAP. A phosphoserine mark is found at Ser631 and Ser640. Residues 639-657 show a composition bias toward basic and acidic residues; it reads ESKPEKEDEPQEDAKELQQ. A compositionally biased stretch (low complexity) spans 707–717; sequence SSGSPEGGSDS. Positions 718–729 are enriched in basic and acidic residues; the sequence is SESRSEFLEKLQ. Residues 1266 to 1338 enclose the MIB/HERC2 domain; it reads VRSQVLKYMV…KFDLKLAPGY (73 aa). Disordered stretches follow at residues 1343–1406 and 1433–1483; these read VASP…KTER and ENVP…SMGI. Residues 1348–1365 show a composition bias toward polar residues; the sequence is PVSSTVSGTTQSWSSLVK. Low complexity-rich tracts occupy residues 1373–1395 and 1441–1458; these read SAAAGSSSRKGSSSSVCSVASSS and GSSSSASTSTLTAETGSE. A Phosphoserine modification is found at Ser1384. The segment covering 1469–1479 has biased composition (polar residues); the sequence is SVRTPGESSAI. A Phosphoserine modification is found at Ser1488. The segment at 1496 to 1515 is disordered; that stretch reads ELTNKEAASQRPLSSSASNR. Ser1567 is subject to Phosphoserine. 2 disordered regions span residues 1592 to 1611 and 1674 to 1757; these read GAQSFPNLTTPGTTSTVTMS and ELDD…KGGR. Low complexity predominate over residues 1600–1611; sequence TTPGTTSTVTMS. The span at 1674–1703 shows a compositional bias: acidic residues; the sequence is ELDDDEDLPEPDEEDDENEDDNQEDQEYEE. The residue at position 1760 (Thr1760) is a Phosphothreonine. Position 1772 is a phosphoserine (Ser1772). Positions 1777–1797 are disordered; the sequence is AFDPRPGRTNVQQTTDLEIPP. The K-box stretch occupies residues 2029–2103; the sequence is FTFPPDEFTS…AIVWLQNRRE (75 aa). The HECT domain maps to 2151–2610; it reads IHADRKSVLE…ATMEKGFHLN (460 aa). A disordered region spans residues 2297 to 2318; sequence HCTESQSEASTEEGHDSLSVGS. The residue at position 2318 (Ser2318) is a Phosphoserine. Cys2579 functions as the Glycyl thioester intermediate in the catalytic mechanism.

It belongs to the UPL family. K-HECT subfamily. In terms of assembly, interacts with IGSF1.

The enzyme catalyses S-ubiquitinyl-[E2 ubiquitin-conjugating enzyme]-L-cysteine + [acceptor protein]-L-lysine = [E2 ubiquitin-conjugating enzyme]-L-cysteine + N(6)-ubiquitinyl-[acceptor protein]-L-lysine.. The protein operates within protein modification; protein ubiquitination. E3 ubiquitin-protein ligase which accepts ubiquitin from an E2 ubiquitin-conjugating enzyme in the form of a thioester and then directly transfers the ubiquitin to targeted substrates. Mediates 'Lys-63'-linked polyubiquitination of HSP90AA1 which leads to its intracellular localization and reduced secretion. Negatively regulating HSP90AA1 secretion in cranial mesenchyme cells may impair their emigration and may be essential for the correct development of the cranial neural folds and neural tube closure. Catalyzes ubiquitination and degradation of ZNF622, an assembly factor for the ribosomal 60S subunit, in hematopoietic cells, thereby promoting hematopoietic stem cell renewal. This Homo sapiens (Human) protein is E3 ubiquitin-protein ligase HECTD1.